Reading from the N-terminus, the 470-residue chain is Cysteine--tRNA ligase (470 aa).

Cys-27 is a Zn(2+) binding site. A 'HIGH' region motif is present at residues Pro-29 to Asn-39. Residues Cys-211, His-236, and Glu-240 each coordinate Zn(2+). Positions Lys-268–Ser-272 match the 'KMSKS' region motif. Lys-271 provides a ligand contact to ATP.

Belongs to the class-I aminoacyl-tRNA synthetase family. Monomer. Requires Zn(2+) as cofactor.

Its subcellular location is the cytoplasm. It catalyses the reaction tRNA(Cys) + L-cysteine + ATP = L-cysteinyl-tRNA(Cys) + AMP + diphosphate. This Clostridium botulinum (strain Alaska E43 / Type E3) protein is Cysteine--tRNA ligase.